The chain runs to 468 residues: Cyclin-dependent kinase 14 (468 aa).

Ser-24, Ser-77, and Ser-94 each carry phosphoserine. The disordered stretch occupies residues 102-131 (FKSSSAGKESPKVRRHSSPSSPTSPKFGKA). Phosphoserine is present on Ser-133. The Protein kinase domain occupies 134-418 (YEKLEKLGEG…AQAALSHEYF (285 aa)). Residues 140-148 (LGEGSYATV) and Lys-163 contribute to the ATP site. The active-site Proton acceptor is Asp-255. Residues 448–468 (ESMRAFGKNSSYGKSLSNSKH) form a disordered region. Residues 455 to 468 (KNSSYGKSLSNSKH) are compositionally biased toward polar residues.

It belongs to the protein kinase superfamily. CMGC Ser/Thr protein kinase family. CDC2/CDKX subfamily. In terms of assembly, found in a complex with LRP6, CCNY and CAPRIN2 during G2/M stage; CAPRIN2 functions as a scaffold for the complex by binding to CCNY via its N terminus and to CDK14 via its C terminus. Interacts with CCNY; CCNY mediates its recruitment to the plasma membrane and promotes phosphorylation of LRP6. Interacts with CCDN3 and CDKN1A. Interacts with SEPT8. Interacts with 14-3-3 proteina YWHAB, YWHAE, YWHAH and YWHAQ.

The protein resides in the cell membrane. It localises to the cytoplasm. Its subcellular location is the nucleus. The enzyme catalyses L-seryl-[protein] + ATP = O-phospho-L-seryl-[protein] + ADP + H(+). The catalysed reaction is L-threonyl-[protein] + ATP = O-phospho-L-threonyl-[protein] + ADP + H(+). Serine/threonine-protein kinase activity is promoted by associated cyclins CCDN3 and CCNY and repressed by CDKN1A. Serine/threonine-protein kinase involved in the control of the eukaryotic cell cycle, whose activity is controlled by an associated cyclin. Acts as a cell-cycle regulator of Wnt signaling pathway during G2/M phase by mediating the phosphorylation of LRP6 at 'Ser-1490', leading to the activation of the Wnt signaling pathway. Acts as a regulator of cell cycle progression and cell proliferation via its interaction with CCDN3. Phosphorylates RB1 in vitro, however the relevance of such result remains to be confirmed in vivo. May also play a role in meiosis, neuron differentiation and may indirectly act as a negative regulator of insulin-responsive glucose transport. This is Cyclin-dependent kinase 14 (CDK14) from Oryctolagus cuniculus (Rabbit).